A 945-amino-acid polypeptide reads, in one-letter code: Xylosyltransferase 1 (945 aa).

Residues 1–17 lie on the Cytoplasmic side of the membrane; that stretch reads MQAAPCARRLARRSHSA. A helical; Signal-anchor for type II membrane protein membrane pass occupies residues 18–38; it reads LLAALTVLLLQTLVVWNFSSL. The Lumenal segment spans residues 39 to 945; sequence DSGAGERRGG…GAVKPDGRLR (907 aa). The segment at 42-245 is disordered; the sequence is AGERRGGAAV…KYDQPPKCDI (204 aa). Residues 76-103 show a composition bias toward gly residues; the sequence is RGGGGGGGGCGGGGRGPQARARGGGPGE. A compositionally biased stretch (basic and acidic residues) spans 131 to 147; sequence KVRTDSNNENSVPKDFE. Residues 149 to 158 show a composition bias toward polar residues; it reads VDNSNFAPRT. Residues 163–190 are compositionally biased toward basic and acidic residues; the sequence is HQPELAKKPPSRQKELLKRKLEQQEKGK. N212 carries N-linked (GlcNAc...) asparagine glycosylation. The segment covering 235–245 has biased composition (basic and acidic residues); that stretch reads TKYDQPPKCDI. Cystine bridges form between C243/C271, C287/C528, C547/C560, and C549/C558. Residues V319, D347, and 376–378 contribute to the UDP-alpha-D-xylose site; that span reads TIW. N407 carries N-linked (GlcNAc...) asparagine glycosylation. 480–481 contributes to the UDP-alpha-D-xylose binding site; sequence DW. UDP-alpha-D-xylose-binding positions include S561 and 584–585; that span reads RK. 2 disulfides stabilise this stretch: C661–C913 and C906–C919. N-linked (GlcNAc...) asparagine glycosylation is present at N763. The tract at residues 926-945 is disordered; that stretch reads SFSPDPKSELGAVKPDGRLR.

It belongs to the glycosyltransferase 14 family. XylT subfamily. As to quaternary structure, monomer. A divalent metal cation serves as cofactor. In terms of processing, contains 7 disulfide bonds. Post-translationally, N-glycosylated.

It localises to the golgi apparatus membrane. It carries out the reaction UDP-alpha-D-xylose + L-seryl-[protein] = 3-O-(beta-D-xylosyl)-L-seryl-[protein] + UDP + H(+). It functions in the pathway glycan metabolism; chondroitin sulfate biosynthesis. Its pathway is glycan metabolism; heparan sulfate biosynthesis. In terms of biological role, catalyzes the first step in the biosynthesis of chondroitin sulfate and dermatan sulfate proteoglycans, such as DCN. Transfers D-xylose from UDP-D-xylose to specific serine residues of the core protein. Required for normal maturation of chondrocytes during bone development, normal onset of ossification and normal embryonic and postnatal skeleton development, especially of the long bones. This Pan troglodytes (Chimpanzee) protein is Xylosyltransferase 1 (XYLT1).